Reading from the N-terminus, the 204-residue chain is Cardiotrophin-2 (204 aa).

Positions 1–22 (MYCLLATPLCLLSLLLPPLSPA) are cleaved as a signal peptide. Asn-44 carries an N-linked (GlcNAc...) asparagine glycan.

Belongs to the IL-6 superfamily. In terms of assembly, binds to tripartite CNTF receptor complex consisting of CNTF alpha chain, LIFR and IL6ST (in vitro). In terms of tissue distribution, not detected in adult tissues.

The protein localises to the secreted. In terms of biological role, increases the platelet count associated with splenomegaly. May have an important role in neuronal precursor development and maturation. This Mus musculus (Mouse) protein is Cardiotrophin-2 (Ctf2).